A 448-amino-acid chain; its full sequence is Chaperone SurA (448 aa).

An N-terminal signal peptide occupies residues 1 to 27 (MKKTLRFAAVAAGLVASLITVAPSASA). PpiC domains are found at residues 185–288 (QQDL…RLVD) and 301–399 (IVQT…QVLG). Residues 230-249 (LAKSQSEADDAKKGGDLGFK) form a disordered region.

It localises to the periplasm. It carries out the reaction [protein]-peptidylproline (omega=180) = [protein]-peptidylproline (omega=0). Functionally, chaperone involved in the correct folding and assembly of outer membrane proteins. Recognizes specific patterns of aromatic residues and the orientation of their side chains, which are found more frequently in integral outer membrane proteins. May act in both early periplasmic and late outer membrane-associated steps of protein maturation. This Burkholderia thailandensis (strain ATCC 700388 / DSM 13276 / CCUG 48851 / CIP 106301 / E264) protein is Chaperone SurA.